A 254-amino-acid chain; its full sequence is Imidazole glycerol phosphate synthase subunit HisF (254 aa).

Active-site residues include aspartate 11 and aspartate 130.

The protein belongs to the HisA/HisF family. As to quaternary structure, heterodimer of HisH and HisF.

It localises to the cytoplasm. The catalysed reaction is 5-[(5-phospho-1-deoxy-D-ribulos-1-ylimino)methylamino]-1-(5-phospho-beta-D-ribosyl)imidazole-4-carboxamide + L-glutamine = D-erythro-1-(imidazol-4-yl)glycerol 3-phosphate + 5-amino-1-(5-phospho-beta-D-ribosyl)imidazole-4-carboxamide + L-glutamate + H(+). The protein operates within amino-acid biosynthesis; L-histidine biosynthesis; L-histidine from 5-phospho-alpha-D-ribose 1-diphosphate: step 5/9. Its function is as follows. IGPS catalyzes the conversion of PRFAR and glutamine to IGP, AICAR and glutamate. The HisF subunit catalyzes the cyclization activity that produces IGP and AICAR from PRFAR using the ammonia provided by the HisH subunit. In Acidiphilium cryptum (strain JF-5), this protein is Imidazole glycerol phosphate synthase subunit HisF.